A 421-amino-acid polypeptide reads, in one-letter code: O-glycoside alpha-1,2-mannosyltransferase homolog 5 (421 aa).

The active-site Nucleophile is the Glu318.

This sequence belongs to the glycosyltransferase 15 family.

It localises to the cytoplasm. Functionally, probable mannosyltransferase involved in O-glycosylation of cell wall and secreted proteins. The chain is O-glycoside alpha-1,2-mannosyltransferase homolog 5 (omh5) from Schizosaccharomyces pombe (strain 972 / ATCC 24843) (Fission yeast).